Consider the following 578-residue polypeptide: MRYSEMFLPTEREIPSDAEVVSHQLMLRAGMIRKLSAGIYSYLPLGYRVLRKVEQIIREEMNRAGAQEVYLPMVQPAELWQESGRWEHYGKELLRFRDRHDREYCLGPTHEEVITDLVRHEIKTYRQLPKNLYQIQTKFRDEIRPRFGVMRGREFGMKDAYSFDADEEGAEISYQKMFEAYKRIFARCGLRFRPVEADSGTIGGSFSHEFMVMADSGEDGLVFCATCSYAANLEKAEVHPPEKMEISNDEMLLLTEVHTPNARTIDEVCAFLNVTPQEIVKTLIFNADGNPVAVLVRGDEEVNEIKVKNYLKCQELELAMDDMIQDVTGAPRGFAGAIGIKKARILADYSLLNMKNVVMGANKEDYHLRNVNEGRDFQISAFADLKVARETDSCPRCQGALKFARGIEVGHVFKLGTKYSKAMGASYLDKNGKEQIMIMGCYGIGTGRTVAACIEQNHDENGIVWPMPISPYQVIITPVNMNDKALAETAERLYESLAGKGAEVLLDDRDERAGVKFKDADLIGIPIRVTVGPKKLAEGKVEVRLRDTGETSDVQVDSVEKMILRVIEGKMSESYLIF.

This sequence belongs to the class-II aminoacyl-tRNA synthetase family. ProS type 1 subfamily. In terms of assembly, homodimer.

It localises to the cytoplasm. The enzyme catalyses tRNA(Pro) + L-proline + ATP = L-prolyl-tRNA(Pro) + AMP + diphosphate. In terms of biological role, catalyzes the attachment of proline to tRNA(Pro) in a two-step reaction: proline is first activated by ATP to form Pro-AMP and then transferred to the acceptor end of tRNA(Pro). As ProRS can inadvertently accommodate and process non-cognate amino acids such as alanine and cysteine, to avoid such errors it has two additional distinct editing activities against alanine. One activity is designated as 'pretransfer' editing and involves the tRNA(Pro)-independent hydrolysis of activated Ala-AMP. The other activity is designated 'posttransfer' editing and involves deacylation of mischarged Ala-tRNA(Pro). The misacylated Cys-tRNA(Pro) is not edited by ProRS. In Syntrophus aciditrophicus (strain SB), this protein is Proline--tRNA ligase.